The primary structure comprises 337 residues: WAT1-related protein At1g11460 (337 aa).

A run of 10 helical transmembrane segments spans residues 14 to 34, 46 to 66, 83 to 103, 107 to 127, 139 to 159, 188 to 208, 220 to 240, 254 to 274, 284 to 304, and 309 to 329; these read WPPI…NALV, IIGA…AYIL, FISG…GLSY, TVAC…ALIL, AGMI…FLTF, WLLG…WILF, FSST…LSLY, FVIG…TVSV, VFVS…DFII, and LYLG…VFLW. The 131-residue stretch at 27-157 folds into the EamA 1 domain; that stretch reads MGSVNALVKK…IICISGALFL (131 aa). The EamA 2 domain occupies 220-328; the sequence is FSSTCLMSIF…GTITGLYVFL (109 aa).

The protein belongs to the drug/metabolite transporter (DMT) superfamily. Plant drug/metabolite exporter (P-DME) (TC 2.A.7.4) family.

It is found in the membrane. The polypeptide is WAT1-related protein At1g11460 (Arabidopsis thaliana (Mouse-ear cress)).